A 274-amino-acid polypeptide reads, in one-letter code: 2,3,4,5-tetrahydropyridine-2,6-dicarboxylate N-succinyltransferase (274 aa).

Positions 106 and 143 each coordinate substrate.

It belongs to the transferase hexapeptide repeat family. Homotrimer.

It localises to the cytoplasm. It catalyses the reaction (S)-2,3,4,5-tetrahydrodipicolinate + succinyl-CoA + H2O = (S)-2-succinylamino-6-oxoheptanedioate + CoA. It functions in the pathway amino-acid biosynthesis; L-lysine biosynthesis via DAP pathway; LL-2,6-diaminopimelate from (S)-tetrahydrodipicolinate (succinylase route): step 1/3. In Rickettsia conorii (strain ATCC VR-613 / Malish 7), this protein is 2,3,4,5-tetrahydropyridine-2,6-dicarboxylate N-succinyltransferase.